Consider the following 339-residue polypeptide: 1-aminocyclopropane-1-carboxylate deaminase (339 aa).

Lys52 is modified (N6-(pyridoxal phosphate)lysine). The Nucleophile role is filled by Ser79.

It belongs to the ACC deaminase/D-cysteine desulfhydrase family. In terms of assembly, homotrimer. It depends on pyridoxal 5'-phosphate as a cofactor.

It catalyses the reaction 1-aminocyclopropane-1-carboxylate + H2O = 2-oxobutanoate + NH4(+). Catalyzes a cyclopropane ring-opening reaction, the irreversible conversion of 1-aminocyclopropane-1-carboxylate (ACC) to ammonia and alpha-ketobutyrate. Allows growth on ACC as a nitrogen source. The sequence is that of 1-aminocyclopropane-1-carboxylate deaminase from Rhizobium leguminosarum bv. viciae.